The chain runs to 49 residues: Large ribosomal subunit protein bL33 (49 aa).

The interval 18-49 (ITTKNKRNNPERLELKKYSPRLKRTTLHRETK) is disordered. The span at 25–34 (NNPERLELKK) shows a compositional bias: basic and acidic residues.

Belongs to the bacterial ribosomal protein bL33 family.

The protein is Large ribosomal subunit protein bL33 of Lysinibacillus sphaericus (strain C3-41).